The sequence spans 346 residues: Methionine import ATP-binding protein MetN 1 (346 aa).

An ABC transporter domain is found at 2-241; the sequence is IELKNVSKVF…PQHVTTKKFV (240 aa). Residue 38 to 45 participates in ATP binding; that stretch reads GYSGAGKS.

Belongs to the ABC transporter superfamily. Methionine importer (TC 3.A.1.24) family. The complex is composed of two ATP-binding proteins (MetN), two transmembrane proteins (MetI) and a solute-binding protein (MetQ).

It is found in the cell membrane. It carries out the reaction L-methionine(out) + ATP + H2O = L-methionine(in) + ADP + phosphate + H(+). The enzyme catalyses D-methionine(out) + ATP + H2O = D-methionine(in) + ADP + phosphate + H(+). Functionally, part of the ABC transporter complex MetNIQ involved in methionine import. Responsible for energy coupling to the transport system. This Bacillus cereus (strain ATCC 14579 / DSM 31 / CCUG 7414 / JCM 2152 / NBRC 15305 / NCIMB 9373 / NCTC 2599 / NRRL B-3711) protein is Methionine import ATP-binding protein MetN 1.